A 465-amino-acid chain; its full sequence is MAQSFRIENDSMGTIKVPDQALWGAQTQRSLINFAIGHNKMPMKLIYSIVQIKASAAIVNCRLGVLDKQRKNFILNACNEISNGMHDEQFPLSVWQTGSGTQTNMNVNEVISNIASHLNGNKLGSHEPLHPNDHVNRSQSTNDVFPAAIQIATVQEILENLLPELDQLIETFDKKIIKWNRIIKTGRTHLQDAVPLTLGQEASAWKEQLIASRNRLNKSLNELYPLPLGGTAIGTGLNAPAKFDKEIALEIAKSTRSPFVSAQNKFAIMASHDALVHTMSQLKLLAVSLFKIVNDLRLLSCGPRGGLGELRLPENEPGSSIMPGKVNPTQCEAMAMVCTQIMALDSAVTMAGSGGHLQMNSYKPLIAFNLLESIDLLSSACKSSRILMIEGIEPNLEKIQNSLQNSLMLITSLTPIIGYEKASKIAQCAHEKDITLKEATKLLGYLNEDDFDRIVNPQSMTGMEN.

Residues 99–101 (SGT), 130–133 (HPND), 140–142 (STN), and Thr188 each bind substrate. His189 acts as the Proton donor/acceptor in catalysis. Ser319 is a catalytic residue. Substrate-binding positions include Ser320 and 325–327 (KVN).

This sequence belongs to the class-II fumarase/aspartase family. Fumarase subfamily. Homotetramer.

The protein localises to the cytoplasm. It catalyses the reaction (S)-malate = fumarate + H2O. It participates in carbohydrate metabolism; tricarboxylic acid cycle; (S)-malate from fumarate: step 1/1. In terms of biological role, involved in the TCA cycle. Catalyzes the stereospecific interconversion of fumarate to L-malate. This chain is Fumarate hydratase class II, found in Prochlorococcus marinus (strain SARG / CCMP1375 / SS120).